Consider the following 211-residue polypeptide: Arginine exporter protein ArgO (211 aa).

6 helical membrane-spanning segments follow: residues 1–21, 37–57, 68–88, 111–131, 147–167, and 179–199; these read MISY…PLGP, LMIA…GIFG, LLAL…LGAL, IIAT…DTFV, WFAL…ALLA, and AQRI…FQLA.

It belongs to the LysE/ArgO transporter (TC 2.A.75) family.

Its subcellular location is the cell inner membrane. It catalyses the reaction L-arginine(in) = L-arginine(out). Its function is as follows. Involved in the export of arginine. Important to control the intracellular level of arginine and the correct balance between arginine and lysine. In Salmonella enteritidis PT4 (strain P125109), this protein is Arginine exporter protein ArgO.